An 81-amino-acid polypeptide reads, in one-letter code: ATP synthase subunit c (81 aa).

Transmembrane regions (helical) follow at residues 6 to 26 (AAASVIAAALAVGLGAIGPGI) and 57 to 77 (LAFMESLTIYGLVIALVLLFA).

It belongs to the ATPase C chain family. F-type ATPases have 2 components, F(1) - the catalytic core - and F(0) - the membrane proton channel. F(1) has five subunits: alpha(3), beta(3), gamma(1), delta(1), epsilon(1). F(0) has four main subunits: a(1), b(1), b'(1) and c(10-14). The alpha and beta chains form an alternating ring which encloses part of the gamma chain. F(1) is attached to F(0) by a central stalk formed by the gamma and epsilon chains, while a peripheral stalk is formed by the delta, b and b' chains.

It localises to the cellular thylakoid membrane. Its function is as follows. F(1)F(0) ATP synthase produces ATP from ADP in the presence of a proton or sodium gradient. F-type ATPases consist of two structural domains, F(1) containing the extramembraneous catalytic core and F(0) containing the membrane proton channel, linked together by a central stalk and a peripheral stalk. During catalysis, ATP synthesis in the catalytic domain of F(1) is coupled via a rotary mechanism of the central stalk subunits to proton translocation. Functionally, key component of the F(0) channel; it plays a direct role in translocation across the membrane. A homomeric c-ring of between 10-14 subunits forms the central stalk rotor element with the F(1) delta and epsilon subunits. The polypeptide is ATP synthase subunit c (Synechocystis sp. (strain ATCC 27184 / PCC 6803 / Kazusa)).